The chain runs to 435 residues: Prenyltransferase nanD (435 aa).

Position 101 (glutamate 101) interacts with substrate. Residues arginine 114, lysine 202, and tyrosine 204 each contribute to the dimethylallyl diphosphate site. Tyrosine 206 is a substrate binding site. The dimethylallyl diphosphate site is built by lysine 280, tyrosine 282, tyrosine 364, tyrosine 429, and tyrosine 433.

The protein belongs to the tryptophan dimethylallyltransferase family.

It functions in the pathway secondary metabolite biosynthesis. Functionally, prenyltransferase; part of the gene cluster that mediates the biosynthesis of the benzazepine alkaloid nanangelenin A which contains an unprecedented 3,4-dihydro-1-benzazepine-2,5-dione-N-prenyl-N-acetoxy-anthranilamide scaffold. The first step of nanangelenin biosynthesis is catalyzed by the indoleamine 2,3-dioxygenase nanC which produces N-formyl-kynurenine through the catabolism of tryptophan. The two-module NRPS nanA then utilizes anthranilate (Ant) and L-kynurenine (L-Kyn) to assemble the dipeptide product nanangelenin B. The first adenylation domain of nanA (A1) loads anthranilate onto the T1 domain, while A2 loads kynurenine, generated through spontaneous nonenzymatic deformylation of the nanC-supplied N-formyl-kynurenine. The peptide bond formation between the tethered amino acids is catalyzed by the first condensation domain (C1) between anthranilate's carbonyl carbon and kynurenine's aliphatic primary amine. The second C domain (C2) catalyzes the final cyclization event between the aromatic amine of kynurenine and the tethered carbonyl carbon, yielding nanangelenin B. The terminal T3 domain enhances the catalytic efficiency of C2, suggesting the T2-tethered Ant-L-Kyn is transferred to T3 prior to cyclization by C2. Once released from nanA, nanangelenin B is then prenylated by the prenyltransferase nanD to form nanangelenin C. Nanangelenin C is then N-hydroxylated by the FAD-dependent monooxygenase nanF and further acetylated by the acetyltransferase nanB to yield nanangelenin F. Finally, the N-methyltransferase nanE methylates the amide nitrogen of 1-benzazepine to convert nanangelenin F into nanangelenin A. NanE is also able to methylate most of the intermediates of the pathway such as nanangelenin B and nanangelenin C to produce nanangelenin D and nanangelenin E, respectively. The sequence is that of Prenyltransferase nanD from Aspergillus nanangensis.